Consider the following 653-residue polypeptide: Threonine--tRNA ligase (653 aa).

In terms of domain architecture, TGS spans 1 to 61; it reads MIKITFPDGN…NEDAEVKLFK (61 aa). The interval 243–542 is catalytic; sequence DHRKIGKELE…LIEHTAGKFP (300 aa). Residues cysteine 338, histidine 389, and histidine 519 each contribute to the Zn(2+) site.

Belongs to the class-II aminoacyl-tRNA synthetase family. Homodimer. Zn(2+) serves as cofactor.

Its subcellular location is the cytoplasm. The catalysed reaction is tRNA(Thr) + L-threonine + ATP = L-threonyl-tRNA(Thr) + AMP + diphosphate + H(+). Functionally, catalyzes the attachment of threonine to tRNA(Thr) in a two-step reaction: L-threonine is first activated by ATP to form Thr-AMP and then transferred to the acceptor end of tRNA(Thr). Also edits incorrectly charged L-seryl-tRNA(Thr). The chain is Threonine--tRNA ligase from Porphyromonas gingivalis (strain ATCC BAA-308 / W83).